The primary structure comprises 260 residues: MIVREWLFFTMAPCDAAEPWQLGFQDAATPMMQGIIDLHHDIFFFLILILVFVSWILVRALWHFHYKKNPIPQRIVHGTTIEIIRTIFPSIILMFIAIPSFALLYSMDEVVVDPAITIKAIGHQWYRSYEYSDYNSSDEQSLTFDSYTIPEDDPELGQSRLLEVDNRVVVPAKTHIRIIVTSADVLHSWAVPSSGVKCDAVPGRLNQTSILVQREGVYYGQCSEICGTNHAFMPIVVEAVSRKDYGSRVSNQLIPQTGEA.

Residues 1–41 (MIVREWLFFTMAPCDAAEPWQLGFQDAATPMMQGIIDLHHD) lie on the Mitochondrial intermembrane side of the membrane. A helical transmembrane segment spans residues 42–58 (IFFFLILILVFVSWILV). Topologically, residues 59–82 (RALWHFHYKKNPIPQRIVHGTTIE) are mitochondrial matrix. Residues 83–104 (IIRTIFPSIILMFIAIPSFALL) traverse the membrane as a helical segment. Residues 105 to 260 (YSMDEVVVDP…NQLIPQTGEA (156 aa)) lie on the Mitochondrial intermembrane side of the membrane. Positions 187, 222, 224, 226, 230, and 233 each coordinate Cu cation. Glu-224 lines the Mg(2+) pocket.

The protein belongs to the cytochrome c oxidase subunit 2 family. Component of the cytochrome c oxidase (complex IV, CIV), a multisubunit enzyme composed of a catalytic core of 3 subunits and several supernumerary subunits. The complex exists as a monomer or a dimer and forms supercomplexes (SCs) in the inner mitochondrial membrane with ubiquinol-cytochrome c oxidoreductase (cytochrome b-c1 complex, complex III, CIII). The cofactor is Cu cation.

The protein localises to the mitochondrion inner membrane. It catalyses the reaction 4 Fe(II)-[cytochrome c] + O2 + 8 H(+)(in) = 4 Fe(III)-[cytochrome c] + 2 H2O + 4 H(+)(out). In terms of biological role, component of the cytochrome c oxidase, the last enzyme in the mitochondrial electron transport chain which drives oxidative phosphorylation. The respiratory chain contains 3 multisubunit complexes succinate dehydrogenase (complex II, CII), ubiquinol-cytochrome c oxidoreductase (cytochrome b-c1 complex, complex III, CIII) and cytochrome c oxidase (complex IV, CIV), that cooperate to transfer electrons derived from NADH and succinate to molecular oxygen, creating an electrochemical gradient over the inner membrane that drives transmembrane transport and the ATP synthase. Cytochrome c oxidase is the component of the respiratory chain that catalyzes the reduction of oxygen to water. Electrons originating from reduced cytochrome c in the intermembrane space (IMS) are transferred via the dinuclear copper A center (CU(A)) of subunit 2 and heme A of subunit 1 to the active site in subunit 1, a binuclear center (BNC) formed by heme A3 and copper B (CU(B)). The BNC reduces molecular oxygen to 2 water molecules using 4 electrons from cytochrome c in the IMS and 4 protons from the mitochondrial matrix. This chain is Cytochrome c oxidase subunit 2 (COX2), found in Beta vulgaris (Sugar beet).